Here is a 135-residue protein sequence, read N- to C-terminus: 30 kDa antigenic glycoprotein (135 aa).

The N-terminal stretch at 1–5 (GNTYS) is a signal peptide. Residues Asn-22, Asn-31, Asn-57, and Asn-73 are each glycosylated (N-linked (GlcNAc...) asparagine).

To H.contortus 15 kDa excretory/secretory protein.

The protein localises to the secreted. The protein is 30 kDa antigenic glycoprotein of Trichostrongylus colubriformis (Black scour worm).